We begin with the raw amino-acid sequence, 262 residues long: Small ribosomal subunit protein mS23 (262 aa).

Residues 211–262 (SGQSDEAPEGEGSDMSAGEYDMAVEELAGQGSIPNTPQSTVVPEGTSAPAHA) form a disordered region. Positions 242–251 (SIPNTPQSTV) are enriched in polar residues.

The protein belongs to the mitochondrion-specific ribosomal protein mS23 family. Component of the mitochondrial small ribosomal subunit.

It localises to the mitochondrion. In Phaeosphaeria nodorum (strain SN15 / ATCC MYA-4574 / FGSC 10173) (Glume blotch fungus), this protein is Small ribosomal subunit protein mS23 (RSM25).